Consider the following 262-residue polypeptide: Undecaprenyl-diphosphatase (262 aa).

Helical transmembrane passes span 15–35 (LTEW…IILL), 38–58 (SSAA…IVAF), 91–111 (LYIL…AKYV), 114–134 (IFGS…LLYS), 149–169 (ALIV…RSGA), 189–209 (FLLS…VSPA), 219–239 (VGLL…LSII), and 242–262 (GRLH…LSLL).

The protein belongs to the UppP family.

The protein localises to the cell membrane. It carries out the reaction di-trans,octa-cis-undecaprenyl diphosphate + H2O = di-trans,octa-cis-undecaprenyl phosphate + phosphate + H(+). Functionally, catalyzes the dephosphorylation of undecaprenyl diphosphate (UPP). The chain is Undecaprenyl-diphosphatase from Korarchaeum cryptofilum (strain OPF8).